Consider the following 30-residue polypeptide: Mycofactocin precursor peptide (30 aa).

Belongs to the mycofactocin precursor peptide family. As to quaternary structure, interacts with MftB. The post-translational modifications that lead to mycofactocin involve oxidative decarboxylation of the C-terminal tyrosine residue catalyzed by MftC, introduction of a tyramine-valine cross-link, removal of the modified C-terminal dipeptide by MftE. The released dipeptide then undergoes oxidative deamination by MftD, glycosylation by MftF and methylation by an unknown enzyme.

Functionally, precursor peptide that leads to mycofactocin (MFT) after extensive post-translational modifications by enzymes encoded by adjacent genes. Mycofactocin acts as a redox cofactor of nicotinamide-dependent oxidoreductases encoded in the same locus. The sequence is that of Mycofactocin precursor peptide from Mycobacterium ulcerans (strain Agy99).